We begin with the raw amino-acid sequence, 246 residues long: Phosducin (246 aa).

A compositionally biased stretch (acidic residues) spans 1–14 (MEEAASQSLEEDFE). The tract at residues 1-70 (MEEAASQSLE…DKDSKERMSR (70 aa)) is disordered. Residues 1 to 246 (MEEAASQSLE…QTNTEDEDIE (246 aa)) enclose the Phosducin domain. Positions 58–69 (SRDDKDSKERMS) are enriched in basic and acidic residues. Ser73 is subject to Phosphoserine; by PKA. Positions 111 to 246 (YGFVYELETG…QTNTEDEDIE (136 aa)) are thioredoxin fold.

This sequence belongs to the phosducin family. As to quaternary structure, interacts with CRX. Forms a complex with the beta and gamma subunits of the GTP-binding protein, transducin. Light-induced changes in cyclic nucleotide levels modulate the phosphorylation of this protein by cAMP kinase.

Its subcellular location is the cytoplasm. It localises to the cytosol. The protein localises to the nucleus. The protein resides in the cell projection. It is found in the cilium. Its subcellular location is the photoreceptor outer segment. It localises to the photoreceptor inner segment. In terms of biological role, inhibits the transcriptional activation activity of the cone-rod homeobox CRX. May participate in the regulation of visual phototransduction or in the integration of photoreceptor metabolism. This is Phosducin (Pdc) from Rattus norvegicus (Rat).